The chain runs to 289 residues: Oxaloacetate decarboxylase 1 (289 aa).

S50 contributes to the substrate binding site. Residue D88 participates in Mg(2+) binding. Substrate-binding residues include R159 and H235.

Belongs to the isocitrate lyase/PEP mutase superfamily. Oxaloacetate decarboxylase family. As to quaternary structure, homotetramer; dimer of dimers. Mg(2+) is required as a cofactor.

It catalyses the reaction oxaloacetate + H(+) = pyruvate + CO2. Its function is as follows. Catalyzes the decarboxylation of oxaloacetate into pyruvate. Seems to play a role in maintaining cellular concentrations of bicarbonate and pyruvate. This is Oxaloacetate decarboxylase 1 from Pseudomonas putida (strain W619).